The chain runs to 113 residues: Hydrogenase maturation factor HybF (113 aa).

Positions 2 and 3 each coordinate Ni(2+). Residues C73, C76, C89, and C92 each contribute to the Zn(2+) site.

This sequence belongs to the HypA/HybF family. HybF subfamily.

In terms of biological role, involved in the maturation of [NiFe] hydrogenases. Required for nickel insertion into the metal center of the hydrogenase. This chain is Hydrogenase maturation factor HybF, found in Escherichia coli O157:H7.